Here is a 192-residue protein sequence, read N- to C-terminus: Superoxide dismutase [Fe] (192 aa).

The Fe cation site is built by His27, His74, Asp157, and His161.

This sequence belongs to the iron/manganese superoxide dismutase family. As to quaternary structure, homodimer. The cofactor is Fe cation.

The enzyme catalyses 2 superoxide + 2 H(+) = H2O2 + O2. In terms of biological role, destroys superoxide anion radicals which are normally produced within the cells and which are toxic to biological systems. This Bordetella pertussis (strain Tohama I / ATCC BAA-589 / NCTC 13251) protein is Superoxide dismutase [Fe] (sodB).